A 353-amino-acid chain; its full sequence is Inactive metacaspase-4 (353 aa).

Residue glycine 2 is the site of N-myristoyl glycine attachment.

Belongs to the peptidase C14B family. Post-translationally, palmitoylated. Proteolytic cleavage by MCA3 occurs prior or during secretion and requires MCA4 membrane localization. Cleavage is dispensable for secretion and parasite growth and virulence in the mammalian host. In vitro, can be cleaved by MCA2 but specifically cleaved by MCA3 in vivo.

The protein localises to the cell projection. The protein resides in the cilium. It is found in the flagellum membrane. Its subcellular location is the secreted. Its function is as follows. Inactive metacaspase which plays a role in parasite bloodstream form growth and in parasite virulence within the mammalian host. The chain is Inactive metacaspase-4 from Trypanosoma brucei brucei.